The primary structure comprises 270 residues: Probable endonuclease LCL3 (270 aa).

The helical transmembrane segment at 15-37 threads the bilayer; the sequence is FYPTVLLFSILLTGGVLTATSFY. The 200-residue stretch at 58 to 257 folds into the TNase-like domain; sequence QWLYGKVTSV…KKAKRGLWSQ (200 aa). Arg-147 is a catalytic residue. A Ca(2+)-binding site is contributed by Asp-152. Catalysis depends on residues Glu-155 and Arg-195.

It belongs to the LCL3 family.

It is found in the mitochondrion. The protein resides in the membrane. This Kluyveromyces lactis (strain ATCC 8585 / CBS 2359 / DSM 70799 / NBRC 1267 / NRRL Y-1140 / WM37) (Yeast) protein is Probable endonuclease LCL3 (LCL3).